We begin with the raw amino-acid sequence, 2095 residues long: MSDTPSTSFSMIHLTSEGQVPSPRHSNITHPVVAKRISFYKSGDPQFGGVRVVVNPRSFKTFDALLDSLSRKVPLPFGVRNISTPRGRHSITRLEELEDGKSYVCSHNKKVLPVDLDKARRRPRPWLSSRSISTHVQLCPATANMSTMAPGMLRAPRRLVVFRNGDPKNKHVVLLSRRITQSFEAFLQYLTQVMQCPVAKLYATDGRKVPSLQAVILSSGAVVAAGREPFKPGNYDIQKYLLPAKLPGISHRVHQKGKAKIEKRKMSTHMPSDLRPQTDSLISEKTYDCFSDFSVAPENYLALETHESQSLSTYPSEDDVEKSIVFNQDGTMTVVMKVRFKIKEEETVKWTTTVNRAGLSNNDEKNKKSSYPGKTDYGPSSLKLEACSLPEDIVDTTQQGSLTEEENTQMTEQQALSCSSASWENASMETDIQESQKQVKHFYRPPTPGPRRMRQKKSVIGTVTVVSETEVQEKQFSYSEERKGGEKSEYHMFTHSCSKMSSVSNKLVQIGSDNEMESALERTRESGSLKSQAINAGAIEITSQKVLKMCHNNALPSTAPENSVVEEGTDNSAVSGTATIKHFRTCGNANDSFSSITADSTPTSVNNYSNDRNISELPSVGSPVLTMRLVNEFAHCGLTEKPENRKKVLSSSASKKKKKKSQQRMITSNDKKKVIETKGPPNIAGKIPRAGTTAQERLLQESDCPDKGGRVCEQGLNISPMAIESNNFFPKSNPTFSKNFYKNKLNTFQNPKTQKLLAKRKSRPRKIVSTERLRKQEIGQEDKILLHSDSKLCESHLEKQSLFHVFNILEEDQKVLHRPPFQVEKVARNLKGMAKKSLVPKVNDLHIMLRNQKKQMGVKLKSGAEVSEQHVTTRADPLASLKKPDFPEGIPHHSGKSYVKRWLQNINSYPDFEHRKSGPLCQNRSDVVNYNRNGFLGNNLHTTSSKGNGFLMESNKSKTKNDNWSGNTNQETGKSLVAKDNGEELNKHHCESQNGSLYDSYLVSLHDNCTLSQTTINEPSTKSHLSIEKSRPEVKLVYQEMNFATKRQSIEVAIQVDTMGENVLKDYLPALLLRHLEAFVPNNQKHQNGISQIPGSLAEVVFPSVIDNSSTNLLLAWLLVLNLKRTMNSFCQSDAHKMTNRPSETAALLEVLKHVAITEEADDLKAAVANLMESTKTCSGSSGREQDMLPVNCTASSLHSVDECNENGSAQKTLLDEGYSVMGDCTSEMVSKSCNSSCEMHMVSKTNPPKQVDDQSDGLLTSNSCTVSQRSTGACFLTDGVYSHEACAQKEGVYEGACLSDETHIPIRDCHTIHSVHSKENKCTDDLESTEELKTVDKVPKGLSILADSMYKNDSNVSTFQNVNKLSSQRTLLSKTYLDSDKDYSPLEEFQNCPRKKIVNKKKSISSDKEESRTSEEPRSITNSMTSSERNAISELESFEELESQDTSIFNMNVRAEKKSTKETMQKQSEARMSSELINVSGRKIIEQERRNTAILETTARGQVTPPSLAFCYDSNKNTEKEISEGETKMRVKKMVDSMENESYSESSLNFKKHHRSPGTLDWSDYGSDSESGYPCKASSNSHNDDSGQEKEPTRGIVKRAIEKLYGKAEIIKPPFFHGSIHKSQVCPYNSVEVQCAKKTNFYESECQSLVSSEQVSRSSLIFQEFPQVDANGMGDSFGDSSIENVTKSSAHDRVFTEKENGKLIDNGKWLLRENHLWRVSSDNPGMYGNADTTSVDTLIDKNSIEVPYSHFGELAPGPTMAELSSSEIEEMTQPLEVKCNYFNFPHGSDSEPFGEDFPDAQNKTCPKEKIPNHHTEEKGNYPSERLCTSVTQAFVSAGNKVHPVCSDAIKTQPLPGSNITHGALQEGDSLDKLYALCGQHCPILTVIIQPVNEESRGFAYRKDSDIENSLDFQLWMKIYPFMPQSKKHVFRSDGRNVSVGEEFAGNVIGDLCDQLYFKSMIDLVDQRANSLGKEINLKKFQLYLKKSFSDPLSTSLLVVENRNSVSLSPSSWTDNFKSIDENNNFLNRLPNSSKNPNQVVRENTNFQFHLELFGQVYLLDICQVEKPLNIKTRSKLEMYYILEGEVLFIWEEEK.

Doublecortin domains follow at residues 35-117 (KRIS…VDLD) and 157-236 (RRLV…GNYD). Disordered stretches follow at residues 358 to 379 (GLSNNDEKNKKSSYPGKTDYGP), 643 to 688 (ENRK…GKIP), 863 to 887 (GAEVSEQHVTTRADPLASLKKPDFP), 1400 to 1430 (NKKKSISSDKEESRTSEEPRSITNSMTSSER), and 1572 to 1595 (SGYPCKASSNSHNDDSGQEKEPTR). A compositionally biased stretch (basic and acidic residues) spans 1405–1419 (ISSDKEESRTSEEPR). Polar residues predominate over residues 1420 to 1430 (SITNSMTSSER). Basic and acidic residues predominate over residues 1583–1595 (HNDDSGQEKEPTR).

Interacts (via the doublecortin domains) with microtubules. Interacts with RP1L1. Interacts with MAK. As to expression, expressed in the cell bodies and inner segments of photoreceptors. Not found in liver, spleen, kidney, brain, thymus, muscle, heart, lung and testis.

It localises to the cytoplasm. The protein resides in the cytoskeleton. Its subcellular location is the cilium axoneme. It is found in the cell projection. The protein localises to the cilium. It localises to the photoreceptor outer segment. In terms of biological role, microtubule-associated protein regulating the stability and length of the microtubule-based axoneme of photoreceptors. Required for the differentiation of photoreceptor cells, it plays a role in the organization of the outer segment of rod and cone photoreceptors ensuring the correct orientation and higher-order stacking of outer segment disks along the photoreceptor axoneme. The chain is Oxygen-regulated protein 1 (Rp1) from Mus musculus (Mouse).